The following is a 289-amino-acid chain: S-methyl-5'-thioadenosine phosphorylase (289 aa).

Phosphate is bound by residues Ser24, 66 to 67, and 99 to 100; these read RH and TA. Met202 contacts substrate. Residue Thr203 participates in phosphate binding. 226–228 is a binding site for substrate; that stretch reads DYD.

The protein belongs to the PNP/MTAP phosphorylase family. MTAP subfamily. Homotrimer.

The protein resides in the cytoplasm. The protein localises to the nucleus. The catalysed reaction is S-methyl-5'-thioadenosine + phosphate = 5-(methylsulfanyl)-alpha-D-ribose 1-phosphate + adenine. Its pathway is amino-acid biosynthesis; L-methionine biosynthesis via salvage pathway; S-methyl-5-thio-alpha-D-ribose 1-phosphate from S-methyl-5'-thioadenosine (phosphorylase route): step 1/1. In terms of biological role, catalyzes the reversible phosphorylation of S-methyl-5'-thioadenosine (MTA) to adenine and 5-methylthioribose-1-phosphate. Involved in the breakdown of MTA, a major by-product of polyamine biosynthesis. Responsible for the first step in the methionine salvage pathway after MTA has been generated from S-adenosylmethionine. Has broad substrate specificity with 6-aminopurine nucleosides as preferred substrates. This chain is S-methyl-5'-thioadenosine phosphorylase, found in Drosophila pseudoobscura pseudoobscura (Fruit fly).